A 274-amino-acid polypeptide reads, in one-letter code: Tropomyosin (274 aa).

Positions 1–35 (MKLEKDNAMDRADTLEQQNKEANNRAEKSEEEVHN) are enriched in basic and acidic residues. The segment at 1-45 (MKLEKDNAMDRADTLEQQNKEANNRAEKSEEEVHNLQKRMQQLEN) is disordered. Residues 1–274 (MKLEKDNAMD…DQTFSELSGY (274 aa)) adopt a coiled-coil conformation.

It belongs to the tropomyosin family. As to quaternary structure, homodimer.

Its function is as follows. Tropomyosin, in association with the troponin complex, plays a central role in the calcium dependent regulation of muscle contraction. This is Tropomyosin from Metapenaeus ensis (Greasyback shrimp).